The sequence spans 626 residues: Anaphase-promoting complex subunit CDC23 (626 aa).

Phosphoserine; by CDC28 is present on S59. TPR repeat units lie at residues 215 to 248 (ALLYYLRGVILKQEKNISKAMSSFLKSLSCYSFN), 295 to 328 (MIKFFKLKVFEELNGQLEDYFEDLEFLLQVFPNF), 329 to 362 (TFLKAYNATISYNNLDYVTAESRFDDIVKQDPYR), 363 to 396 (LNDLETYSNILYVMQKNSKLAYLAQFVSQIDRFR), 397 to 430 (PETCCIIANYYSARQEHEKSIMYFRRALTLDKKT), 431 to 464 (TNAWTLMGHEFVELSNSHAAIECYRRAVDICPRD), 465 to 498 (FKAWFGLGQAYALLDMHLYSLYYFQKACTLKPWD), 499 to 532 (RRIWQVLGECYSKTGNKVEAIKCYKRSIKASQTV), and 536 to 569 (TSIYYRLAQLYEELEDLQECKKFMMKCVDVEELL).

The protein belongs to the APC8/CDC23 family. In terms of assembly, the APC/C is composed of at least 13 subunits that stay tightly associated throughout the cell cycle: APC1, APC2, APC4, APC5, APC9, APC11, CDC16, CDC23, CDC26, CDC27, DOC1, MND2 and SWM1. CDC23 interacts directly with SWM1 and binds the destruction box (D-box) of the substrate cyclin CLB2. In terms of processing, phosphorylated by CDC28, which is required for the early mitotic activity of the APC/C in its CDC20-bound form.

The protein resides in the nucleus. Its subcellular location is the chromosome. The protein localises to the centromere. It is found in the kinetochore. It participates in protein modification; protein ubiquitination. Functionally, component of the anaphase promoting complex/cyclosome (APC/C), a cell cycle-regulated E3 ubiquitin-protein ligase complex that controls progression through mitosis and the G1 phase of the cell cycle. The APC/C is thought to confer substrate specificity and, in the presence of ubiquitin-conjugating E2 enzymes, it catalyzes the formation of protein-ubiquitin conjugates that are subsequently degraded by the 26S proteasome. In early mitosis, the APC/C is activated by CDC20 and targets securin PDS1, the B-type cyclin CLB5, and other anaphase inhibitory proteins for proteolysis, thereby triggering the separation of sister chromatids at the metaphase-to-anaphase transition. In late mitosis and in G1, degradation of CLB5 allows activation of the APC/C by CDH1, which is needed to destroy CDC20 and the B-type cyclin CLB2 to allow exit from mitosis and creating the low CDK state necessary for cytokinesis and for reforming prereplicative complexes in G1 prior to another round of replication. The sequence is that of Anaphase-promoting complex subunit CDC23 (CDC23) from Saccharomyces cerevisiae (strain ATCC 204508 / S288c) (Baker's yeast).